The chain runs to 734 residues: Paralemmin-3 (734 aa).

A coiled-coil region spans residues 19–64 (SALYRQRLEVIAEKRRLQEEIGAARRELEEEKLRVERLKRKSLRER). Disordered stretches follow at residues 62 to 100 (RERW…RNLE) and 114 to 217 (QSAS…LGVS). Residues 73–82 (GPERPEEPAS) show a composition bias toward basic and acidic residues. The stretch at 90-116 (GQAQARIRNLEDSLFSLQSQLQLLQSA) forms a coiled coil. Phosphoserine is present on residues Ser-139, Ser-158, Ser-167, Ser-170, and Ser-172. Polar residues predominate over residues 186–198 (RPSTEAIGTSSEA). Ser-270 carries the post-translational modification Phosphoserine. Residues 297–308 (DVTGESGRDAEA) are compositionally biased toward basic and acidic residues. 3 disordered regions span residues 297–347 (DVTG…PGVE), 374–400 (PQGA…SWEV), and 413–709 (EKGR…YAPA). Thr-311 bears the Phosphothreonine mark. A compositionally biased stretch (basic and acidic residues) spans 315–336 (RLQEQFEAETCRKEEGASRDSL). A phosphoserine mark is found at Ser-332 and Ser-335. Composition is skewed to basic and acidic residues over residues 413-427 (EKGR…REDG), 435-452 (TQGR…KDSE), 462-484 (DEEK…KGGE), 494-531 (LVTE…ESKT), 540-561 (IGDK…EKTG), 571-582 (EGSKKLLDREAD), 589-607 (EVDK…EQGK), and 630-647 (DEPR…KQEG). The residue at position 451 (Ser-451) is a Phosphoserine. Phosphoserine is present on Ser-601. Ser-721 carries the phosphoserine modification. S-palmitoyl cysteine attachment occurs at residues Cys-728 and Cys-730. A Cysteine methyl ester modification is found at Cys-731. Residue Cys-731 is the site of S-farnesyl cysteine attachment. A propeptide spans 732-734 (VVM) (removed in mature form).

Belongs to the paralemmin family. Interacts with SIGIRR. In terms of processing, palmitoylated on Cys-728 and Cys-730 and prenylated on Cys-731; which is required for membrane association.

The protein localises to the cytoplasm. The protein resides in the cell membrane. In terms of biological role, ATP-binding protein, which may act as a adapter in the Toll-like receptor (TLR) signaling. This chain is Paralemmin-3 (Palm3), found in Mus musculus (Mouse).